The primary structure comprises 543 residues: Cytochrome P450 1B1 (543 aa).

Position 470 (C470) interacts with heme.

This sequence belongs to the cytochrome P450 family. Heme is required as a cofactor.

Its subcellular location is the endoplasmic reticulum membrane. The protein localises to the microsome membrane. It localises to the mitochondrion. It catalyses the reaction an organic molecule + reduced [NADPH--hemoprotein reductase] + O2 = an alcohol + oxidized [NADPH--hemoprotein reductase] + H2O + H(+). It carries out the reaction 17beta-estradiol + reduced [NADPH--hemoprotein reductase] + O2 = 2-hydroxy-17beta-estradiol + oxidized [NADPH--hemoprotein reductase] + H2O + H(+). The enzyme catalyses 17beta-estradiol + reduced [NADPH--hemoprotein reductase] + O2 = 4-hydroxy-17beta-estradiol + oxidized [NADPH--hemoprotein reductase] + H2O + H(+). The catalysed reaction is estrone + reduced [NADPH--hemoprotein reductase] + O2 = 2-hydroxyestrone + oxidized [NADPH--hemoprotein reductase] + H2O + H(+). It catalyses the reaction estrone + reduced [NADPH--hemoprotein reductase] + O2 = 4-hydroxyestrone + oxidized [NADPH--hemoprotein reductase] + H2O + H(+). It carries out the reaction testosterone + reduced [NADPH--hemoprotein reductase] + O2 = 6beta,17beta-dihydroxyandrost-4-en-3-one + oxidized [NADPH--hemoprotein reductase] + H2O + H(+). The enzyme catalyses progesterone + reduced [NADPH--hemoprotein reductase] + O2 = 6beta-hydroxyprogesterone + oxidized [NADPH--hemoprotein reductase] + H2O + H(+). The catalysed reaction is progesterone + reduced [NADPH--hemoprotein reductase] + O2 = 16alpha-hydroxyprogesterone + oxidized [NADPH--hemoprotein reductase] + H2O + H(+). It catalyses the reaction all-trans-retinol + reduced [NADPH--hemoprotein reductase] + O2 = all-trans-retinal + oxidized [NADPH--hemoprotein reductase] + 2 H2O + H(+). It carries out the reaction all-trans-retinal + reduced [NADPH--hemoprotein reductase] + O2 = all-trans-retinoate + oxidized [NADPH--hemoprotein reductase] + H2O + 2 H(+). The enzyme catalyses (5Z,8Z,11Z,14Z)-eicosatetraenoate + reduced [NADPH--hemoprotein reductase] + O2 = (8R,9S)-epoxy-(5Z,11Z,14Z)-eicosatrienoate + oxidized [NADPH--hemoprotein reductase] + H2O + H(+). The catalysed reaction is (5Z,8Z,11Z,14Z)-eicosatetraenoate + reduced [NADPH--hemoprotein reductase] + O2 = (11R,12S)-epoxy-(5Z,8Z,14Z)-eicosatrienoate + oxidized [NADPH--hemoprotein reductase] + H2O + H(+). It catalyses the reaction (5Z,8Z,11Z,14Z)-eicosatetraenoate + reduced [NADPH--hemoprotein reductase] + O2 = (11S,12R)-epoxy-(5Z,8Z,14Z)-eicosatrienoate + oxidized [NADPH--hemoprotein reductase] + H2O + H(+). It carries out the reaction (5Z,8Z,11Z,14Z)-eicosatetraenoate + reduced [NADPH--hemoprotein reductase] + O2 = (14S,15R)-epoxy-(5Z,8Z,11Z)-eicosatrienoate + oxidized [NADPH--hemoprotein reductase] + H2O + H(+). The enzyme catalyses (5Z,8Z,11Z,14Z)-eicosatetraenoate + reduced [NADPH--hemoprotein reductase] + O2 = (14R,15S)-epoxy-(5Z,8Z,11Z)-eicosatrienoate + oxidized [NADPH--hemoprotein reductase] + H2O + H(+). The catalysed reaction is (5S)-hydroperoxy-(6E,8Z,11Z,14Z)-eicosatetraenoate = 5-oxo-(6E,8Z,11Z,14Z)-eicosatetraenoate + H2O. It catalyses the reaction (12S)-hydroperoxy-(5Z,8Z,10E,14Z)-eicosatetraenoate = 12-oxo-(5Z,8Z,10E,14Z)-eicosatetraenoate + H2O. It carries out the reaction (15S)-hydroperoxy-(5Z,8Z,11Z,13E)-eicosatetraenoate = 15-oxo-(5Z,8Z,11Z,13E)-eicosatetraenoate + H2O. The enzyme catalyses (13S)-hydroperoxy-(9Z,11E)-octadecadienoate = 13-oxo-(9Z,11E)-octadecadienoate + H2O. The protein operates within steroid hormone biosynthesis. It functions in the pathway cofactor metabolism; retinol metabolism. It participates in lipid metabolism; arachidonate metabolism. Enzyme activity is increased by cytochrome b5. Enzyme activity is increased by liposomes containing anionic phospholipids, phosphatidic acid and cardiolipin. Inhibited by naringenin with an IC(50) of 5 uM. Functionally, a cytochrome P450 monooxygenase involved in the metabolism of various endogenous substrates, including fatty acids, steroid hormones and vitamins. Mechanistically, uses molecular oxygen inserting one oxygen atom into a substrate, and reducing the second into a water molecule, with two electrons provided by NADPH via cytochrome P450 reductase (NADPH--hemoprotein reductase). Exhibits catalytic activity for the formation of hydroxyestrogens from 17beta-estradiol (E2), namely 2- and 4-hydroxy E2. Metabolizes testosterone and progesterone to B or D ring hydroxylated metabolites. May act as a major enzyme for all-trans retinoic acid biosynthesis in extrahepatic tissues. Catalyzes two successive oxidative transformation of all-trans retinol to all-trans retinal and then to the active form all-trans retinoic acid. Catalyzes the epoxidation of double bonds of certain PUFA. Converts arachidonic acid toward epoxyeicosatrienoic acid (EpETrE) regioisomers, 8,9-, 11,12-, and 14,15- EpETrE, that function as lipid mediators in the vascular system. Additionally, displays dehydratase activity toward oxygenated eicosanoids including hydroperoxyeicosatetraenoates (HpETEs). This activity is independent of cytochrome P450 reductase, NADPH, and O2. Also involved in the oxidative metabolism of xenobiotics, particularly converting polycyclic aromatic hydrocarbons and heterocyclic aryl amines procarcinogens to DNA-damaging products. Plays an important role in retinal vascular development. Under ambient/hyperoxic O2 conditions, promotes angiogenesis and capillary morphogenesis of retinal endothelial cells and pericytes, likely by metabolizing the oxygenated products symptomatic of oxidative stress. Also, contributes to oxidative homeostasis and ultrastructural organization and function of trabecular meshwork tissue through modulation of POSTN expression. The chain is Cytochrome P450 1B1 from Rattus norvegicus (Rat).